A 520-amino-acid chain; its full sequence is GMP synthase [glutamine-hydrolyzing] (520 aa).

The Glutamine amidotransferase type-1 domain occupies Lys9–His202. Catalysis depends on Cys86, which acts as the Nucleophile. Residues His176 and Glu178 contribute to the active site. Positions Trp203–Arg395 constitute a GMPS ATP-PPase domain. Position 230–236 (Ser230–Ser236) interacts with ATP.

As to quaternary structure, homodimer.

It catalyses the reaction XMP + L-glutamine + ATP + H2O = GMP + L-glutamate + AMP + diphosphate + 2 H(+). Its pathway is purine metabolism; GMP biosynthesis; GMP from XMP (L-Gln route): step 1/1. Functionally, catalyzes the synthesis of GMP from XMP. The chain is GMP synthase [glutamine-hydrolyzing] from Pelobacter propionicus (strain DSM 2379 / NBRC 103807 / OttBd1).